The following is a 350-amino-acid chain: Probable 2-dehydropantoate 2-reductase (350 aa).

Residues Gly-9–Gly-14 and Asn-115 each bind NADP(+). Residue Asn-115 coordinates substrate. Lys-213 serves as the catalytic Proton donor. Residues Asn-217, Asn-221, and Ser-295 each contribute to the substrate site. Glu-307 lines the NADP(+) pocket.

It belongs to the ketopantoate reductase family.

It catalyses the reaction (R)-pantoate + NADP(+) = 2-dehydropantoate + NADPH + H(+). It participates in cofactor biosynthesis; (R)-pantothenate biosynthesis; (R)-pantoate from 3-methyl-2-oxobutanoate: step 2/2. In terms of biological role, catalyzes the NADPH-dependent reduction of ketopantoate into pantoic acid. This chain is Probable 2-dehydropantoate 2-reductase, found in Schizosaccharomyces pombe (strain 972 / ATCC 24843) (Fission yeast).